The primary structure comprises 105 residues: Ferredoxin--nitrite reductase, chloroplastic (105 aa).

Positions 28 and 32 each coordinate [4Fe-4S] cluster. C32 contacts siroheme.

Belongs to the nitrite and sulfite reductase 4Fe-4S domain family. In terms of assembly, monomer. Requires siroheme as cofactor. [4Fe-4S] cluster serves as cofactor. In terms of tissue distribution, highest expression in roots and hypocotyls. Some expression in cotyledonary whorls.

It localises to the plastid. The protein resides in the chloroplast. The enzyme catalyses 6 oxidized [2Fe-2S]-[ferredoxin] + NH4(+) + 2 H2O = nitrite + 6 reduced [2Fe-2S]-[ferredoxin] + 8 H(+). Its pathway is nitrogen metabolism; nitrate reduction (assimilation). This chain is Ferredoxin--nitrite reductase, chloroplastic (NIR), found in Pinus sylvestris (Scotch pine).